Consider the following 234-residue polypeptide: Ribonuclease 3 (234 aa).

Residues 4 to 133 (LLDLEHKLNY…ILGAVYIDSN (130 aa)) form the RNase III domain. Residue E46 coordinates Mg(2+). D50 is a catalytic residue. Mg(2+) is bound by residues D119 and E122. Residue E122 is part of the active site. The region spanning 160–228 (DFKSILQEYV…AKALCIKLGV (69 aa)) is the DRBM domain.

This sequence belongs to the ribonuclease III family. As to quaternary structure, homodimer. Mg(2+) is required as a cofactor.

It is found in the cytoplasm. The catalysed reaction is Endonucleolytic cleavage to 5'-phosphomonoester.. Digests double-stranded RNA. Involved in the processing of primary rRNA transcript to yield the immediate precursors to the large and small rRNAs (23S and 16S). Processes some mRNAs, and tRNAs when they are encoded in the rRNA operon. Processes pre-crRNA and tracrRNA of type II CRISPR loci if present in the organism. In Fusobacterium nucleatum subsp. nucleatum (strain ATCC 25586 / DSM 15643 / BCRC 10681 / CIP 101130 / JCM 8532 / KCTC 2640 / LMG 13131 / VPI 4355), this protein is Ribonuclease 3.